A 232-amino-acid chain; its full sequence is Platelet-activating factor acetylhydrolase IB subunit alpha1 (232 aa).

Residue Ser-2 is modified to N-acetylserine. Ser-2 carries the post-translational modification Phosphoserine. Residues Ser-47, Asp-192, and His-195 contribute to the active site.

This sequence belongs to the 'GDSL' lipolytic enzyme family. Platelet-activating factor acetylhydrolase IB beta/gamma subunits subfamily. In terms of assembly, forms a catalytic dimer which is either homodimer (alpha1/alpha1 homodimer) or heterodimer with PAFAH1B2 (alpha1/alpha2 heterodimer). Component of the cytosolic (PAF-AH (I)) heterotetrameric enzyme, which is composed of PAFAH1B1 (beta), PAFAH1B2 (alpha2) and PAFAH1B3 (alpha1) subunits. The catalytic activity of the enzyme resides in the alpha1 (PAFAH1B3) and alpha2 (PAFAH1B2) subunits, whereas the beta subunit (PAFAH1B1) has regulatory activity. Trimer formation is not essential for the catalytic activity. Interacts with VLDLR; this interaction may modulate the Reelin pathway.

It localises to the cytoplasm. It carries out the reaction a 1-O-alkyl-2-acetyl-sn-glycero-3-phosphocholine + H2O = a 1-O-alkyl-sn-glycero-3-phosphocholine + acetate + H(+). It catalyses the reaction 1-O-hexadecyl-2-acetyl-sn-glycero-3-phosphocholine + H2O = 1-O-hexadecyl-sn-glycero-3-phosphocholine + acetate + H(+). The enzyme catalyses 1-O-hexadecyl-2-acetyl-sn-glycero-3-phosphate + H2O = 1-O-hexadecyl-sn-glycero-3-phosphate + acetate + H(+). Its activity is regulated as follows. Beta subunit (PAFAH1B1) inhibits the acetylhydrolase activity of the alpha1/alpha1 catalytic homodimer. In terms of biological role, alpha1 catalytic subunit of the cytosolic type I platelet-activating factor (PAF) acetylhydrolase (PAF-AH (I)) heterotetrameric enzyme that catalyzes the hydrolyze of the acetyl group at the sn-2 position of PAF and its analogs and modulates the action of PAF. The activity and substrate specificity of PAF-AH (I) are affected by its subunit composition. Both alpha1/alpha1 homodimer (PAFAH1B3/PAFAH1B3 homodimer) and alpha1/alpha2 heterodimer(PAFAH1B3/PAFAH1B2 heterodimer) hydrolyze 1-O-alkyl-2-acetyl-sn-glycero-3-phosphoric acid (AAGPA) more efficiently than PAF, but they have little hydrolytic activity towards 1-O-alkyl-2-acetyl-sn-glycero-3-phosphorylethanolamine (AAGPE). Plays an important role during the development of brain. The sequence is that of Platelet-activating factor acetylhydrolase IB subunit alpha1 from Bos taurus (Bovine).